A 90-amino-acid polypeptide reads, in one-letter code: Phosphocarrier protein NPr (90 aa).

An HPr domain is found at 2 to 90 (TVKQTVEITN…ALFNSGFDED (89 aa)). His-16 serves as the catalytic Pros-phosphohistidine intermediate.

It belongs to the HPr family.

The protein resides in the cytoplasm. Functionally, component of the phosphoenolpyruvate-dependent nitrogen-metabolic phosphotransferase system (nitrogen-metabolic PTS), that seems to be involved in regulating nitrogen metabolism. The phosphoryl group from phosphoenolpyruvate (PEP) is transferred to the phosphoryl carrier protein NPr by enzyme I-Ntr. Phospho-NPr then transfers it to EIIA-Ntr. Could function in the transcriptional regulation of sigma-54 dependent operons in conjunction with the NPr (PtsO) and EIIA-Ntr (PtsN) proteins. This is Phosphocarrier protein NPr (ptsO) from Escherichia coli O157:H7.